Consider the following 80-residue polypeptide: Translation initiation factor IF-1 (80 aa).

The 75-residue stretch at E6 to R80 folds into the S1-like domain.

The protein belongs to the IF-1 family. In terms of assembly, component of the 30S ribosomal translation pre-initiation complex which assembles on the 30S ribosome in the order IF-2 and IF-3, IF-1 and N-formylmethionyl-tRNA(fMet); mRNA recruitment can occur at any time during PIC assembly.

Its subcellular location is the cytoplasm. One of the essential components for the initiation of protein synthesis. Stabilizes the binding of IF-2 and IF-3 on the 30S subunit to which N-formylmethionyl-tRNA(fMet) subsequently binds. Helps modulate mRNA selection, yielding the 30S pre-initiation complex (PIC). Upon addition of the 50S ribosomal subunit IF-1, IF-2 and IF-3 are released leaving the mature 70S translation initiation complex. This is Translation initiation factor IF-1 from Deinococcus radiodurans (strain ATCC 13939 / DSM 20539 / JCM 16871 / CCUG 27074 / LMG 4051 / NBRC 15346 / NCIMB 9279 / VKM B-1422 / R1).